Consider the following 1007-residue polypeptide: Protein vav-1 (1007 aa).

In terms of domain architecture, Calponin-homology (CH) spans 37 to 151 (CDLWIGCARW…TLSFLSHTKE (115 aa)). Residues 151–239 (ESLSRGVDPF…ENDLQNTPTL (89 aa)) are AC. The disordered stretch occupies residues 153–176 (LSRGVDPFPDTDNNQEGTSNGSEF). Residues 163-174 (TDNNQEGTSNGS) show a composition bias toward polar residues. Tyrosine 183, tyrosine 200, and tyrosine 217 each carry phosphotyrosine. The 198-residue stretch at 240–437 (KRNRCIRELY…EDVCNYINEE (198 aa)) folds into the DH domain. Positions 470 to 598 (RVNLDGEVKM…WMTALLLSKS (129 aa)) constitute a PH domain. The Phorbol-ester/DAG-type zinc finger occupies 610-664 (NHKVAFHSFRVDVKNPATCDVCDKLMKGLQYQGYKCESCNMSMHKECLGLKKCEA). Residues 688-750 (HEGDIVVANS…HLDHVSQSRT (63 aa)) form the SH3 1 domain. The disordered stretch occupies residues 778 to 817 (LPNKLLSDGSSRSLSGPHGSRSSRNSSSSTINGSMDSVPR). Low complexity predominate over residues 782 to 814 (LLSDGSSRSLSGPHGSRSSRNSSSSTINGSMDS). Positions 831 to 925 (WYMGEMERAK…ALDTCLKNPY (95 aa)) constitute an SH2 domain. Residues 926 to 991 (SQCKVFKAVH…PLSYVKPYDP (66 aa)) form the SH3 2 domain.

Post-translationally, GEF activity is regulated by phosphorylation on tyrosine residues. In terms of tissue distribution, strong expression in the pharynx, proximal gonad, spermatheca, intestine and rectal epithelia.

In terms of biological role, acts as a guanine nucleotide exchange factor (GEF) for Rho GTPase. Has a critical roles in the generation of rhythmic behaviors: feeding, defecation and ovulation by dynamically regulating the concentration of intracellular calcium. Plays a role in male tail tip morphogenesis. The polypeptide is Protein vav-1 (Caenorhabditis elegans).